We begin with the raw amino-acid sequence, 293 residues long: Exosome complex component RRP4 (293 aa).

In terms of domain architecture, S1 motif spans 79-159 (EVGDIVVGRI…SDGAVSLHTR (81 aa)). Ser-124 bears the Phosphoserine mark.

This sequence belongs to the RRP4 family. As to quaternary structure, component of the RNA exosome core complex (Exo-9), composed of EXOSC1, EXOSC2, EXOSC3, EXOSC4, EXOSC5, EXOSC6, EXOSC7, EXOSC8 and EXOSC9; within the complex interacts with EXOSC4 and EXOSC7. The catalytically inactive RNA exosome core complex (Exo-9) associates with the catalytic subunit EXOSC10/RRP6. Exo-9 may associate with DIS3 to form the nucleolar exosome complex, or DIS3L to form the cytoplasmic exosome complex. Exo-9 is formed by a hexameric base ring consisting of the heterodimers EXOSC4-EXOSC9, EXOSC5-EXOSC8 and EXOSC6-EXOSC7, and a cap ring consisting of EXOSC1, EXOSC2 and EXOSC3. The RNA exosome complex associates with cofactors C1D/RRP47, MPHOSPH6/MPP6 and MTREX/MTR4. Interacts with GTPBP1. Interacts with ZFP36L1 (via N-terminus).

The protein resides in the cytoplasm. The protein localises to the nucleus. It localises to the nucleolus. Functionally, non-catalytic component of the RNA exosome complex which has 3'-&gt;5' exoribonuclease activity and participates in a multitude of cellular RNA processing and degradation events. In the nucleus, the RNA exosome complex is involved in proper maturation of stable RNA species such as rRNA, snRNA and snoRNA, in the elimination of RNA processing by-products and non-coding 'pervasive' transcripts, such as antisense RNA species and promoter-upstream transcripts (PROMPTs), and of mRNAs with processing defects, thereby limiting or excluding their export to the cytoplasm. The RNA exosome may be involved in Ig class switch recombination (CSR) and/or Ig variable region somatic hypermutation (SHM) by targeting AICDA deamination activity to transcribed dsDNA substrates. In the cytoplasm, the RNA exosome complex is involved in general mRNA turnover and specifically degrades inherently unstable mRNAs containing AU-rich elements (AREs) within their 3' untranslated regions, and in RNA surveillance pathways, preventing translation of aberrant mRNAs. It seems to be involved in degradation of histone mRNA. The catalytic inactive RNA exosome core complex of 9 subunits (Exo-9) is proposed to play a pivotal role in the binding and presentation of RNA for ribonucleolysis, and to serve as a scaffold for the association with catalytic subunits and accessory proteins or complexes. EXOSC2 as peripheral part of the Exo-9 complex stabilizes the hexameric ring of RNase PH-domain subunits through contacts with EXOSC4 and EXOSC7. The chain is Exosome complex component RRP4 from Homo sapiens (Human).